A 156-amino-acid chain; its full sequence is Small ribosomal subunit protein uS7 (156 aa).

The protein belongs to the universal ribosomal protein uS7 family. In terms of assembly, part of the 30S ribosomal subunit. Contacts proteins S9 and S11.

In terms of biological role, one of the primary rRNA binding proteins, it binds directly to 16S rRNA where it nucleates assembly of the head domain of the 30S subunit. Is located at the subunit interface close to the decoding center, probably blocks exit of the E-site tRNA. The sequence is that of Small ribosomal subunit protein uS7 from Anaeromyxobacter sp. (strain Fw109-5).